The chain runs to 120 residues: NADH-quinone oxidoreductase subunit A (120 aa).

The next 3 membrane-spanning stretches (helical) occupy residues 10-30, 65-85, and 89-109; these read ILVF…MGWF, VAIL…WAVV, and IGWF…VGFI.

This sequence belongs to the complex I subunit 3 family. NDH-1 is composed of 14 different subunits. Subunits NuoA, H, J, K, L, M, N constitute the membrane sector of the complex.

It localises to the cell inner membrane. It catalyses the reaction a quinone + NADH + 5 H(+)(in) = a quinol + NAD(+) + 4 H(+)(out). NDH-1 shuttles electrons from NADH, via FMN and iron-sulfur (Fe-S) centers, to quinones in the respiratory chain. The immediate electron acceptor for the enzyme in this species is believed to be ubiquinone. Couples the redox reaction to proton translocation (for every two electrons transferred, four hydrogen ions are translocated across the cytoplasmic membrane), and thus conserves the redox energy in a proton gradient. This Coxiella burnetii (strain Dugway 5J108-111) protein is NADH-quinone oxidoreductase subunit A.